A 107-amino-acid polypeptide reads, in one-letter code: BolA-like protein 3 (107 aa).

This sequence belongs to the BolA/IbaG family. In terms of assembly, interacts with NFU1. Widely expressed.

Its subcellular location is the mitochondrion. Its function is as follows. Acts as a mitochondrial iron-sulfur (Fe-S) cluster assembly factor that facilitates (Fe-S) cluster insertion into a subset of mitochondrial proteins. Probably acts together with NFU1. This is BolA-like protein 3 from Homo sapiens (Human).